The primary structure comprises 318 residues: Acyl-CoA dehydrogenase IpdE2 (318 aa).

Residues Arg210 and Gly277 each coordinate FAD.

The protein belongs to the acyl-CoA dehydrogenase family. As to quaternary structure, heterotetramer composed of 2 IpdE1 subunits and 2 IpdE2 subunits. Requires FAD as cofactor.

It carries out the reaction 3-[(3aS,4S,5R,7aS)-5-hydroxy-7a-methyl-1-oxo-octahydro-1H-inden-4-yl]propanoyl-CoA + A = (2E)-3-[(3aS,4S,5R,7aS)-5-hydroxy-7a-methyl-1-oxo-octahydro-1H-inden-4-yl]prop-2-enoyl-CoA + AH2. It participates in steroid metabolism; cholesterol degradation. In terms of biological role, involved in cholesterol degradation. Catalyzes the dehydrogenation of 5OH-HIP-CoA to 5OH-HIPE-CoA. Can also use octanoyl-CoA and dihydroferuloyl-CoA, with lower efficiency. Cannot use 3-oxo-4-pregnene-20-carboxyl-CoA (3-OPC-CoA). The protein is Acyl-CoA dehydrogenase IpdE2 of Mycobacterium tuberculosis (strain ATCC 25618 / H37Rv).